The primary structure comprises 82 residues: RNA-binding protein Hfq (82 aa).

The 60-residue stretch at D9–V68 folds into the Sm domain.

This sequence belongs to the Hfq family. As to quaternary structure, homohexamer.

Functionally, RNA chaperone that binds small regulatory RNA (sRNAs) and mRNAs to facilitate mRNA translational regulation in response to envelope stress, environmental stress and changes in metabolite concentrations. Also binds with high specificity to tRNAs. This is RNA-binding protein Hfq from Pseudomonas aeruginosa (strain LESB58).